The primary structure comprises 91 residues: uncharacterized protein (91 aa).

Helical transmembrane passes span 9–29 (VLWG…PFLP), 44–64 (LTVN…VFAW), and 71–91 (QFVF…CLAL).

Its subcellular location is the cell membrane. This is an uncharacterized protein from Bacillus subtilis (strain 168).